Here is a 120-residue protein sequence, read N- to C-terminus: Large ribosomal subunit protein bL19 (120 aa).

It belongs to the bacterial ribosomal protein bL19 family.

Functionally, this protein is located at the 30S-50S ribosomal subunit interface and may play a role in the structure and function of the aminoacyl-tRNA binding site. The polypeptide is Large ribosomal subunit protein bL19 (Crocosphaera subtropica (strain ATCC 51142 / BH68) (Cyanothece sp. (strain ATCC 51142))).